The primary structure comprises 553 residues: Dihydroxy-acid dehydratase (553 aa).

Asp-78 serves as a coordination point for Mg(2+). [2Fe-2S] cluster is bound at residue Cys-119. Asp-120 and Lys-121 together coordinate Mg(2+). Lys-121 carries the post-translational modification N6-carboxylysine. Cys-191 is a binding site for [2Fe-2S] cluster. Position 444 (Glu-444) interacts with Mg(2+). The active-site Proton acceptor is the Ser-470.

It belongs to the IlvD/Edd family. In terms of assembly, homodimer. [2Fe-2S] cluster serves as cofactor. Mg(2+) is required as a cofactor.

The enzyme catalyses (2R)-2,3-dihydroxy-3-methylbutanoate = 3-methyl-2-oxobutanoate + H2O. It catalyses the reaction (2R,3R)-2,3-dihydroxy-3-methylpentanoate = (S)-3-methyl-2-oxopentanoate + H2O. It functions in the pathway amino-acid biosynthesis; L-isoleucine biosynthesis; L-isoleucine from 2-oxobutanoate: step 3/4. It participates in amino-acid biosynthesis; L-valine biosynthesis; L-valine from pyruvate: step 3/4. Functionally, functions in the biosynthesis of branched-chain amino acids. Catalyzes the dehydration of (2R,3R)-2,3-dihydroxy-3-methylpentanoate (2,3-dihydroxy-3-methylvalerate) into 2-oxo-3-methylpentanoate (2-oxo-3-methylvalerate) and of (2R)-2,3-dihydroxy-3-methylbutanoate (2,3-dihydroxyisovalerate) into 2-oxo-3-methylbutanoate (2-oxoisovalerate), the penultimate precursor to L-isoleucine and L-valine, respectively. The sequence is that of Dihydroxy-acid dehydratase from Methanococcoides burtonii (strain DSM 6242 / NBRC 107633 / OCM 468 / ACE-M).